The sequence spans 54 residues: Califin-B (54 aa).

Cysteine 25 and cysteine 53 are oxidised to a cystine. Position 36 is a leucine amide (leucine 36).

This sequence belongs to the molluscan ELH family. In terms of assembly, this protein consists of a large 36-residue subunit, bound by a single disulfide-bond to a small 18-residue subunit.

The protein resides in the secreted. Functionally, injected in sexually mature animals califin B excites LB and LC cells of the abdominal ganglion and cause egg-laying. This chain is Califin-B, found in Aplysia californica (California sea hare).